The sequence spans 174 residues: uncharacterized protein (174 aa).

The chain crosses the membrane as a helical span at residues 7-27 (LIILAIFTLWVGGFGYYLYLI).

It is found in the membrane. This is an uncharacterized protein from Rickettsia prowazekii (strain Madrid E).